The following is a 193-amino-acid chain: MELRSGNSMVVAPKSKGIIDPNTGKLIGSDDRFFHDINAELSDKGFLVTSADALITWARTGSLMWMSFGLACCAIEMMQCSMPHYDNERFGYAPRASPRQSDVMVVAGTLTNKMAPALRKVYDQMPEPRYVISMGSCANGGGYYHYSYSVVRGCDRIVPVDIYVPGCPPTAEALLYGILLLQKKIRRTGSIER.

[4Fe-4S] cluster is bound by residues Cys72, Cys73, Cys137, and Cys167.

This sequence belongs to the complex I 20 kDa subunit family. As to quaternary structure, NDH-1 is composed of 14 different subunits. Subunits NuoB, C, D, E, F, and G constitute the peripheral sector of the complex. [4Fe-4S] cluster serves as cofactor.

The protein resides in the cell inner membrane. The catalysed reaction is a quinone + NADH + 5 H(+)(in) = a quinol + NAD(+) + 4 H(+)(out). Its function is as follows. NDH-1 shuttles electrons from NADH, via FMN and iron-sulfur (Fe-S) centers, to quinones in the respiratory chain. The immediate electron acceptor for the enzyme in this species is believed to be ubiquinone. Couples the redox reaction to proton translocation (for every two electrons transferred, four hydrogen ions are translocated across the cytoplasmic membrane), and thus conserves the redox energy in a proton gradient. The polypeptide is NADH-quinone oxidoreductase subunit B (Bartonella quintana (strain Toulouse) (Rochalimaea quintana)).